We begin with the raw amino-acid sequence, 318 residues long: Ribosomal RNA small subunit methyltransferase H (318 aa).

S-adenosyl-L-methionine is bound by residues 38-40 (GGH), aspartate 58, tyrosine 86, aspartate 107, and glutamine 114.

Belongs to the methyltransferase superfamily. RsmH family.

The protein resides in the cytoplasm. The catalysed reaction is cytidine(1402) in 16S rRNA + S-adenosyl-L-methionine = N(4)-methylcytidine(1402) in 16S rRNA + S-adenosyl-L-homocysteine + H(+). In terms of biological role, specifically methylates the N4 position of cytidine in position 1402 (C1402) of 16S rRNA. The polypeptide is Ribosomal RNA small subunit methyltransferase H (Methylibium petroleiphilum (strain ATCC BAA-1232 / LMG 22953 / PM1)).